Reading from the N-terminus, the 136-residue chain is Protein PsiE (136 aa).

The next 4 membrane-spanning stretches (helical) occupy residues 15–35 (ILQTVLNLGLLCLGLILVVFL), 55–75 (YELVEGLVVYFLYFEFIALIV), 82–102 (FHFPLRYFVYIGITAIVRLII), and 108–128 (PLDVLIYSAAILLLVITLWLC).

The protein belongs to the PsiE family.

It is found in the cell inner membrane. The sequence is that of Protein PsiE from Escherichia coli (strain SE11).